We begin with the raw amino-acid sequence, 492 residues long: Aspartyl/glutamyl-tRNA(Asn/Gln) amidotransferase subunit B (492 aa).

It belongs to the GatB/GatE family. GatB subfamily. As to quaternary structure, heterotrimer of A, B and C subunits.

The catalysed reaction is L-glutamyl-tRNA(Gln) + L-glutamine + ATP + H2O = L-glutaminyl-tRNA(Gln) + L-glutamate + ADP + phosphate + H(+). The enzyme catalyses L-aspartyl-tRNA(Asn) + L-glutamine + ATP + H2O = L-asparaginyl-tRNA(Asn) + L-glutamate + ADP + phosphate + 2 H(+). Functionally, allows the formation of correctly charged Asn-tRNA(Asn) or Gln-tRNA(Gln) through the transamidation of misacylated Asp-tRNA(Asn) or Glu-tRNA(Gln) in organisms which lack either or both of asparaginyl-tRNA or glutaminyl-tRNA synthetases. The reaction takes place in the presence of glutamine and ATP through an activated phospho-Asp-tRNA(Asn) or phospho-Glu-tRNA(Gln). The chain is Aspartyl/glutamyl-tRNA(Asn/Gln) amidotransferase subunit B from Dehalococcoides mccartyi (strain CBDB1).